The primary structure comprises 116 residues: Distal membrane-arm assembly complex protein 1 (116 aa).

Residues 1–39 are disordered; it reads MGSRLSQPFESYITAPPGTAAAPAKPAPPATPGAPTSPA. Low complexity predominate over residues 14-24; the sequence is TAPPGTAAAPA. 2 helical membrane-spanning segments follow: residues 52–69 and 82–104; these read VLSG…YWVA and WTIT…GIVV.

In terms of assembly, interacts with incompletely assembled mitochondrial NADH:ubiquinone oxidoreductase complex (complex I).

Its subcellular location is the mitochondrion inner membrane. Functionally, required for the assembly of the mitochondrial NADH:ubiquinone oxidoreductase complex (complex I). Involved in the assembly of the distal region of complex I. This chain is Distal membrane-arm assembly complex protein 1, found in Homo sapiens (Human).